Here is a 425-residue protein sequence, read N- to C-terminus: Adenosylhomocysteinase (425 aa).

The substrate site is built by threonine 60, aspartate 132, and glutamate 157. Position 158–160 (threonine 158–threonine 160) interacts with NAD(+). Positions 187 and 191 each coordinate substrate. NAD(+)-binding positions include asparagine 192, glycine 221–glycine 226, glutamate 244, asparagine 279, serine 300–histidine 302, and asparagine 347.

The protein belongs to the adenosylhomocysteinase family. NAD(+) serves as cofactor.

The protein resides in the cytoplasm. It carries out the reaction S-adenosyl-L-homocysteine + H2O = L-homocysteine + adenosine. It participates in amino-acid biosynthesis; L-homocysteine biosynthesis; L-homocysteine from S-adenosyl-L-homocysteine: step 1/1. Its function is as follows. May play a key role in the regulation of the intracellular concentration of adenosylhomocysteine. In Synechocystis sp. (strain ATCC 27184 / PCC 6803 / Kazusa), this protein is Adenosylhomocysteinase.